The sequence spans 96 residues: GTPase HRas (96 aa).

M1 carries the N-acetylmethionine modification. An N-acetylthreonine; in GTPase HRas, N-terminally processed modification is found at T2. 10–17 (GAGGVGKS) lines the GTP pocket. The Effector region motif lies at 32 to 40 (YDPTIEDSY). 57 to 61 (DTAGQ) is a binding site for GTP.

The protein belongs to the small GTPase superfamily. Ras family. As to quaternary structure, in its GTP-bound form interacts with PLCE1. Interacts with TBC1D10C. Interacts with RGL3. Interacts with HSPD1. Found in a complex with at least BRAF, HRAS, MAP2K1, MAPK3 and RGS14. Interacts (active GTP-bound form) with RGS14 (via RBD 1 domain). Forms a signaling complex with RASGRP1 and DGKZ. Interacts with RASSF5. Interacts with PDE6D. Interacts with IKZF3. Interacts with RACK1. Interacts with PIK3CG; the interaction is required for membrane recruitment and beta-gamma G protein dimer-dependent activation of the PI3K gamma complex PIK3CG:PIK3R6. Interacts with RAPGEF2. Interacts (active GTP-bound form) with both SHOC2 and PP1c (all isoforms) to form a tertiary complex; SHOC2 and PP1c preferably bind M-Ras/MRAS, but they also bind K-Ras/KRAS, N-Ras/NRAS and H-Ras/HRAS. Interacts (in GTP-bound form) with Oog1. Interacts (GTP-bound form) with MAPKAP1/SIN1; inhibiting H-Ras/HRAS activity. Ubiquitinated by the BCR(LZTR1) E3 ubiquitin ligase complex at Lys-170 in a non-degradative manner, leading to inhibit Ras signaling by decreasing Ras association with membranes.

It localises to the cell membrane. Its subcellular location is the golgi apparatus. It is found in the golgi apparatus membrane. The catalysed reaction is GTP + H2O = GDP + phosphate + H(+). With respect to regulation, alternates between an inactive form bound to GDP and an active form bound to GTP. Activated by a guanine nucleotide-exchange factor (GEF) and inactivated by a GTPase-activating protein (GAP). In terms of biological role, ras proteins bind GDP/GTP and possess intrinsic GTPase activity. This Mesocricetus auratus (Golden hamster) protein is GTPase HRas (HRAS).